The sequence spans 427 residues: Histidinol dehydrogenase (427 aa).

Positions 232, 254, and 257 each coordinate substrate. The Zn(2+) site is built by Gln254 and His257. Active-site proton acceptor residues include Glu322 and His323. Substrate-binding residues include His323, Asp356, Glu410, and His415. Asp356 lines the Zn(2+) pocket. Position 415 (His415) interacts with Zn(2+).

The protein belongs to the histidinol dehydrogenase family. Requires Zn(2+) as cofactor.

It carries out the reaction L-histidinol + 2 NAD(+) + H2O = L-histidine + 2 NADH + 3 H(+). It functions in the pathway amino-acid biosynthesis; L-histidine biosynthesis; L-histidine from 5-phospho-alpha-D-ribose 1-diphosphate: step 9/9. Its function is as follows. Catalyzes the sequential NAD-dependent oxidations of L-histidinol to L-histidinaldehyde and then to L-histidine. The polypeptide is Histidinol dehydrogenase (Listeria monocytogenes serotype 4b (strain F2365)).